A 180-amino-acid chain; its full sequence is MKMLLLLCLGLTLVCVHAEEASSTGRNFNVEKINGEWHTIILASDKREKIEDNGNFRLFLEQIHVLENSLVLKFHTVRDEECSELSMVADKTEKAGEYSVTYDGFNTFTIPKTDYDNFLMAHLINEKDGETFQLMGLYGREPDLSSDIKERFAQLCEEHGILRENIIDLSNANRCLQARE.

The signal sequence occupies residues 1–18 (MKMLLLLCLGLTLVCVHA). C82 and C175 form a disulfide bridge.

Belongs to the calycin superfamily. Lipocalin family. In terms of tissue distribution, abundant in the urine of adult male mice but absent from that of females.

The protein localises to the secreted. Binds pheromones that are released from drying urine of males. These pheromones affect the sexual behavior of females. The protein is Major urinary protein 6 (Mup6) of Mus musculus (Mouse).